A 191-amino-acid polypeptide reads, in one-letter code: MKKQLFSALIGASLLAPMAASAADYVIDREGAHASITFKVSHLGYSYVVGRFNDFSGDFSYDAAKPTAAKVNVTVNTLSVDSNHAERDKHIRSADFLNTSKFAQATFTSTTVEDKGNGDLVINGNLTLNGVTKPLAINAHAVGEGQDPWGGYRAGFTGTTTFAMKDFGIKMDLGPASSHVELDLVVEGVRK.

Residues 1 to 22 form the signal peptide; the sequence is MKKQLFSALIGASLLAPMAASA.

It belongs to the UPF0312 family. Type 1 subfamily.

The protein localises to the periplasm. This is UPF0312 protein Sbal195_3198 from Shewanella baltica (strain OS195).